A 469-amino-acid polypeptide reads, in one-letter code: Aspartyl/glutamyl-tRNA(Asn/Gln) amidotransferase subunit B (469 aa).

This sequence belongs to the GatB/GatE family. GatB subfamily. Heterotrimer of A, B and C subunits.

It carries out the reaction L-glutamyl-tRNA(Gln) + L-glutamine + ATP + H2O = L-glutaminyl-tRNA(Gln) + L-glutamate + ADP + phosphate + H(+). It catalyses the reaction L-aspartyl-tRNA(Asn) + L-glutamine + ATP + H2O = L-asparaginyl-tRNA(Asn) + L-glutamate + ADP + phosphate + 2 H(+). Its function is as follows. Allows the formation of correctly charged Asn-tRNA(Asn) or Gln-tRNA(Gln) through the transamidation of misacylated Asp-tRNA(Asn) or Glu-tRNA(Gln) in organisms which lack either or both of asparaginyl-tRNA or glutaminyl-tRNA synthetases. The reaction takes place in the presence of glutamine and ATP through an activated phospho-Asp-tRNA(Asn) or phospho-Glu-tRNA(Gln). The protein is Aspartyl/glutamyl-tRNA(Asn/Gln) amidotransferase subunit B of Thermus thermophilus (strain ATCC BAA-163 / DSM 7039 / HB27).